A 1047-amino-acid polypeptide reads, in one-letter code: Cation efflux system protein CusA (1047 aa).

A run of 12 helical transmembrane segments spans residues 14–34 (FLVL…IINT), 338–358 (LSGK…LFLW), 363–383 (ALVA…VMHF), 391–411 (MSLG…IVMI), 446–466 (VGPA…PIFT), 485–505 (AMAG…GYWI), 532–552 (VLHW…TVLW), 871–891 (KLKL…YLAF), 898–918 (LLII…LWWM), 928–948 (TGFI…LMYL), 985–1005 (AMTV…TGAG), and 1012–1032 (IAAP…FIIP).

It belongs to the resistance-nodulation-cell division (RND) (TC 2.A.6) family. The cus efflux system is composed of CusA, CusB, CusC and CusF.

It is found in the cell inner membrane. Part of a cation efflux system that mediates resistance to copper and silver. The sequence is that of Cation efflux system protein CusA (cusA) from Escherichia coli (strain K12).